Here is a 443-residue protein sequence, read N- to C-terminus: Chromosome partition protein MukF (443 aa).

The leucine-zipper stretch occupies residues 209 to 237 (LDETSGNLRELQDTLNAAGDKLQAQLLRI).

Belongs to the MukF family. In terms of assembly, interacts, and probably forms a ternary complex, with MukE and MukB via its C-terminal region. The complex formation is stimulated by calcium or magnesium. It is required for an interaction between MukE and MukB.

Its subcellular location is the cytoplasm. It is found in the nucleoid. Involved in chromosome condensation, segregation and cell cycle progression. May participate in facilitating chromosome segregation by condensation DNA from both sides of a centrally located replisome during cell division. Not required for mini-F plasmid partitioning. Probably acts via its interaction with MukB and MukE. Overexpression results in anucleate cells. It has a calcium binding activity. This Actinobacillus pleuropneumoniae serotype 5b (strain L20) protein is Chromosome partition protein MukF.